A 163-amino-acid chain; its full sequence is Extracellular giant hemoglobin major globin subunit B2 (163 aa).

Residues 1-16 (MIALFVLMGLMAAASA) form the signal peptide. A Globin domain is found at 19–163 (CCSSEDRANV…RIANGISAGL (145 aa)). Cysteine 20 and cysteine 151 are joined by a disulfide. Cysteine 83 provides a ligand contact to hydrogen sulfide. Residue histidine 114 participates in heme b binding.

It belongs to the globin family. As to quaternary structure, the 400 kDa hemoglobin consists of a spherical 24-mer arranged as a double layer of dome-shaped dodecamers. Each dodecamer is composed of the 3-fold trimer of the tetramer A1-A2-B1-B2 having one intra-tetramer (A1-B2) disulfide bond and one inter-tetramer (B1-B2) disulfide bond per tetramer.

It localises to the secreted. In terms of biological role, the extracellular giant hemoglobin is able to bind and transport oxygen and hydrosulfide simultaneously and reversibly at two different sites. This Oligobrachia mashikoi (Beard worm) protein is Extracellular giant hemoglobin major globin subunit B2 (ghbB2).